The primary structure comprises 352 residues: Lipase chaperone (352 aa).

A helical membrane pass occupies residues 7–28 (LSLVAVVVAGGLTLYWRWPAAV).

The protein belongs to the lipase chaperone family.

It localises to the cell inner membrane. Its function is as follows. May be involved in the folding of the extracellular lipase during its passage through the periplasm. The sequence is that of Lipase chaperone (lifO) from Pseudomonas wisconsinensis.